A 289-amino-acid chain; its full sequence is Delta-sarcoglycan (289 aa).

Topologically, residues 1–35 are cytoplasmic; the sequence is MPQEQYTHHRSTMPGSVGPQVYKVGIYGWRKRCLY. A helical; Signal-anchor for type II membrane protein membrane pass occupies residues 36-56; the sequence is FFVLLLMILILVNLAMTIWIL. Residues 57 to 289 are Extracellular-facing; the sequence is KVMNFTIDGM…TCQINTSVCL (233 aa). N-linked (GlcNAc...) asparagine glycosylation is found at Asn60 and Asn108. 2 disulfide bridges follow: Cys263-Cys288 and Cys265-Cys281. N-linked (GlcNAc...) asparagine glycosylation is present at Asn284.

Belongs to the sarcoglycan beta/delta/gamma/zeta family. In terms of assembly, interacts with FLNC and DAG1. Cross-link to form 2 major subcomplexes: one consisting of SGCB, SGCD and SGCG and the other consisting of SGCB and SGCD. The association between SGCB and SGCG is particularly strong while SGCA is loosely associated with the other sarcoglycans. Glycosylated. In terms of processing, disulfide bonds are present. As to expression, most strongly expressed in skeletal and cardiac muscle. Also detected in smooth muscle. Weak expression in brain and lung.

It localises to the cell membrane. The protein localises to the sarcolemma. Its subcellular location is the cytoplasm. It is found in the cytoskeleton. Its function is as follows. Component of the sarcoglycan complex, a subcomplex of the dystrophin-glycoprotein complex which forms a link between the F-actin cytoskeleton and the extracellular matrix. This chain is Delta-sarcoglycan (SGCD), found in Homo sapiens (Human).